Reading from the N-terminus, the 266-residue chain is Small ribosomal subunit protein uS2 (266 aa).

Belongs to the universal ribosomal protein uS2 family.

This Bartonella tribocorum (strain CIP 105476 / IBS 506) protein is Small ribosomal subunit protein uS2.